A 737-amino-acid polypeptide reads, in one-letter code: Oligopeptide transporter 3 (737 aa).

A run of 16 helical transmembrane segments spans residues Ala45 to Tyr65, Pro69 to Ala89, Val117 to Ile137, Phe153 to Ile173, Phe215 to Ile235, Val255 to Ser275, Ile289 to Trp309, Leu357 to Thr377, Trp418 to Trp438, Trp446 to Ile466, Ile478 to Phe498, Ala532 to Leu552, Val604 to Phe624, Trp629 to Thr649, Pro650 to Tyr670, and Val681 to Leu701.

The protein belongs to the oligopeptide OPT transporter (TC 2.A.67.1) family. Strong expression in flowers, leaves and roots. Preferentially expressed in the vascular tissues of seedlings and mature plants as well as in pollen and developing embryos.

It localises to the membrane. Its function is as follows. May be involved in the translocation of tetra- and pentapeptides across the cellular membrane in an energy-dependent manner. Also acts as a metal transporter that could be a component of the copper transport machinery. Essential for early embryo development. The polypeptide is Oligopeptide transporter 3 (OPT3) (Arabidopsis thaliana (Mouse-ear cress)).